Here is a 216-residue protein sequence, read N- to C-terminus: Histidine biosynthesis bifunctional protein HisIE (216 aa).

The phosphoribosyl-AMP cyclohydrolase stretch occupies residues 1 to 127; sequence MSFIDSLSPQ…GKIVAPPGDT (127 aa). The interval 128–216 is phosphoribosyl-ATP pyrophosphohydrolase; sequence LSQVFQVICD…VYRKLQERRR (89 aa).

It in the N-terminal section; belongs to the PRA-CH family. In the C-terminal section; belongs to the PRA-PH family.

The protein localises to the cytoplasm. The catalysed reaction is 1-(5-phospho-beta-D-ribosyl)-ATP + H2O = 1-(5-phospho-beta-D-ribosyl)-5'-AMP + diphosphate + H(+). The enzyme catalyses 1-(5-phospho-beta-D-ribosyl)-5'-AMP + H2O = 1-(5-phospho-beta-D-ribosyl)-5-[(5-phospho-beta-D-ribosylamino)methylideneamino]imidazole-4-carboxamide. The protein operates within amino-acid biosynthesis; L-histidine biosynthesis; L-histidine from 5-phospho-alpha-D-ribose 1-diphosphate: step 2/9. It functions in the pathway amino-acid biosynthesis; L-histidine biosynthesis; L-histidine from 5-phospho-alpha-D-ribose 1-diphosphate: step 3/9. The sequence is that of Histidine biosynthesis bifunctional protein HisIE (hisI) from Nostoc sp. (strain PCC 7120 / SAG 25.82 / UTEX 2576).